Here is a 1016-residue protein sequence, read N- to C-terminus: DNA polymerase I (1016 aa).

A 5'-3' exonuclease domain is found at 1 to 308; the sequence is MPNSIWTSSD…MEFTTLTRRV (308 aa). The disordered stretch occupies residues 334-361; sequence GPDLDAAEPEPVAGGIPEVSGESVPMPP. A 3'-5' exonuclease domain is found at 394-630; sequence SAYVTIRDLV…MEARGITVDR (237 aa). The interval 768-1016 is polymerase; that stretch reads GRKIRTAFIS…RAATNWDEAH (249 aa).

Belongs to the DNA polymerase type-A family. As to quaternary structure, single-chain monomer with multiple functions.

The catalysed reaction is DNA(n) + a 2'-deoxyribonucleoside 5'-triphosphate = DNA(n+1) + diphosphate. In addition to polymerase activity, this DNA polymerase exhibits 3'-5' and 5'-3' exonuclease activity. This Rhizobium leguminosarum protein is DNA polymerase I (polA).